The primary structure comprises 321 residues: Phospho-N-acetylmuramoyl-pentapeptide-transferase (321 aa).

10 helical membrane-spanning segments follow: residues 4–24, 51–71, 75–95, 109–129, 139–159, 173–193, 195–215, 222–242, 247–267, and 297–317; these read MVWAFIVASAVGLLIGPWLIP, TMGGLLFLIAVPMAVLVTVGF, SGVLLLGLLGFGLIGFLDDYI, QKFTGQLILSLILIYGVVYGI, GFEVWWDAGALYYPLALLLIV, GLAAGMTFWVALAFAAIASAG, SDVTAAFAAALAGGCIGFLFF, MFMGDTGSLALGGAVATLALL, LILPVLGAVFVAETLSVILQV, and VVYTFWAASLISAFLGVLLAM.

The protein belongs to the glycosyltransferase 4 family. MraY subfamily. Mg(2+) is required as a cofactor.

It localises to the cell membrane. It carries out the reaction UDP-N-acetyl-alpha-D-muramoyl-L-alanyl-gamma-D-glutamyl-meso-2,6-diaminopimeloyl-D-alanyl-D-alanine + di-trans,octa-cis-undecaprenyl phosphate = di-trans,octa-cis-undecaprenyl diphospho-N-acetyl-alpha-D-muramoyl-L-alanyl-D-glutamyl-meso-2,6-diaminopimeloyl-D-alanyl-D-alanine + UMP. The protein operates within cell wall biogenesis; peptidoglycan biosynthesis. Catalyzes the initial step of the lipid cycle reactions in the biosynthesis of the cell wall peptidoglycan: transfers peptidoglycan precursor phospho-MurNAc-pentapeptide from UDP-MurNAc-pentapeptide onto the lipid carrier undecaprenyl phosphate, yielding undecaprenyl-pyrophosphoryl-MurNAc-pentapeptide, known as lipid I. The chain is Phospho-N-acetylmuramoyl-pentapeptide-transferase from Heliobacterium modesticaldum (strain ATCC 51547 / Ice1).